The chain runs to 455 residues: Putative non-structural protein (455 aa).

Residues 262–276 (KERKTTHKTLVEDTH) show a composition bias toward basic and acidic residues. Residues 262–341 (KERKTTHKTL…GVLTKKKSLK (80 aa)) form a disordered region.

This is Putative non-structural protein from Bombyx mori (Silk moth).